Reading from the N-terminus, the 265-residue chain is MTTEDTLTIAGRSYQSRLLVGTGKYQDFAQTRAALDASGTQIVTVAIRRTNIGQNPDEPSLLDFVPPSQFTLLPNTAGCYSADDAVRTLRLARELLDGHDLVKLEVLGDPQNLFPNMPETLKATKTLVDEGFKVMVYCTDDPIQCRMLEDLGAVAVMPLASLIGSGMGILNPWNLRLIIDQSSVPVLVDAGVGTASDAAIAMELGCDGVLMNTAIAGARDPILMASAMRKAVEGGREAYLAGRVPRKLYSAAPSSPTEGLIAAAK.

Catalysis depends on Lys103, which acts as the Schiff-base intermediate with DXP. 1-deoxy-D-xylulose 5-phosphate is bound by residues Gly164, 190–191, and 212–213; these read AG and NT.

The protein belongs to the ThiG family. In terms of assembly, homotetramer. Forms heterodimers with either ThiH or ThiS.

It localises to the cytoplasm. The enzyme catalyses [ThiS sulfur-carrier protein]-C-terminal-Gly-aminoethanethioate + 2-iminoacetate + 1-deoxy-D-xylulose 5-phosphate = [ThiS sulfur-carrier protein]-C-terminal Gly-Gly + 2-[(2R,5Z)-2-carboxy-4-methylthiazol-5(2H)-ylidene]ethyl phosphate + 2 H2O + H(+). The protein operates within cofactor biosynthesis; thiamine diphosphate biosynthesis. In terms of biological role, catalyzes the rearrangement of 1-deoxy-D-xylulose 5-phosphate (DXP) to produce the thiazole phosphate moiety of thiamine. Sulfur is provided by the thiocarboxylate moiety of the carrier protein ThiS. In vitro, sulfur can be provided by H(2)S. This chain is Thiazole synthase, found in Bordetella pertussis (strain Tohama I / ATCC BAA-589 / NCTC 13251).